The following is a 304-amino-acid chain: Murein tetrapeptide carboxypeptidase (304 aa).

Catalysis depends on serine 106, which acts as the Nucleophile. Active-site charge relay system residues include glutamate 200 and histidine 270.

The protein belongs to the peptidase S66 family.

The protein localises to the cytoplasm. It carries out the reaction N-acetyl-D-glucosaminyl-N-acetylmuramoyl-L-alanyl-meso-2,6-diaminoheptanedioyl-D-alanine + H2O = N-acetyl-D-glucosaminyl-N-acetylmuramoyl-L-alanyl-meso-2,6-diaminoheptanedioate + D-alanine. It functions in the pathway cell wall biogenesis; peptidoglycan recycling. Inhibited by beta-lactams containing a D-amino acid side chain. Releases the terminal D-alanine residue from the cytoplasmic tetrapeptide recycling product L-Ala-gamma-D-Glu-meso-Dap-D-Ala. To a lesser extent, can also cleave D-Ala from murein derivatives containing the tetrapeptide, i.e. MurNAc-tetrapeptide, UDP-MurNAc-tetrapeptide, GlcNAc-MurNAc-tetrapeptide, and GlcNAc-anhMurNAc-tetrapeptide. Does not act on murein sacculi or cross-linked muropeptides. The tripeptides produced by the LcdA reaction can then be reused as peptidoglycan building blocks; LcdA is thereby involved in murein recycling. Is also essential for viability during stationary phase. In Escherichia coli (strain K12), this protein is Murein tetrapeptide carboxypeptidase (ldcA).